The primary structure comprises 324 residues: Ribosomal RNA small subunit methyltransferase H (324 aa).

Residues 41–43, Asp60, Tyr87, Asp111, and Gln118 each bind S-adenosyl-L-methionine; that span reads GGH.

It belongs to the methyltransferase superfamily. RsmH family.

Its subcellular location is the cytoplasm. The enzyme catalyses cytidine(1402) in 16S rRNA + S-adenosyl-L-methionine = N(4)-methylcytidine(1402) in 16S rRNA + S-adenosyl-L-homocysteine + H(+). In terms of biological role, specifically methylates the N4 position of cytidine in position 1402 (C1402) of 16S rRNA. The protein is Ribosomal RNA small subunit methyltransferase H of Nocardia farcinica (strain IFM 10152).